We begin with the raw amino-acid sequence, 259 residues long: Dickkopf-related protein 2 (259 aa).

The signal sequence occupies residues 1-33 (MAALMRSKDSSCCLLLLAAVLMVESSQIGSSRA). N-linked (GlcNAc...) asparagine glycosylation occurs at Asn-52. Residues 78 to 127 (CSSDKECEVGRYCHSPHQGSSACMVCRRKKKRCHRDGMCCPSTRCNNGIC) form a DKK-type Cys-1 region. 5 cysteine pairs are disulfide-bonded: Cys-183–Cys-195, Cys-189–Cys-204, Cys-194–Cys-231, Cys-214–Cys-239, and Cys-233–Cys-256. Residues 183–256 (CLRSSDCIEG…YSSKARLHVC (74 aa)) form a DKK-type Cys-2 region.

Belongs to the dickkopf family. In terms of assembly, interacts with LRP5 and LRP6. In terms of processing, may be proteolytically processed by a furin-like protease. Expressed in heart, brain, skeletal muscle and lung.

The protein localises to the secreted. Functionally, antagonizes canonical Wnt signaling by inhibiting LRP5/6 interaction with Wnt and by forming a ternary complex with the transmembrane protein KREMEN that promotes internalization of LRP5/6. DKKs play an important role in vertebrate development, where they locally inhibit Wnt regulated processes such as antero-posterior axial patterning, limb development, somitogenesis and eye formation. In the adult, Dkks are implicated in bone formation and bone disease, cancer and Alzheimer disease. The sequence is that of Dickkopf-related protein 2 (DKK2) from Homo sapiens (Human).